We begin with the raw amino-acid sequence, 575 residues long: Methionine--tRNA ligase, mitochondrial (575 aa).

A 'HIGH' region motif is present at residues 20 to 32 (PIFYPNAKPHLGH). The 'KMSKS' region signature appears at 341-345 (KMSKS). Lysine 344 serves as a coordination point for ATP.

It belongs to the class-I aminoacyl-tRNA synthetase family.

The protein localises to the mitochondrion matrix. It carries out the reaction tRNA(Met) + L-methionine + ATP = L-methionyl-tRNA(Met) + AMP + diphosphate. Functionally, catalyzes the attachment of methionine to tRNA(Met) in the mitochondrion. This Saccharomyces cerevisiae (strain ATCC 204508 / S288c) (Baker's yeast) protein is Methionine--tRNA ligase, mitochondrial (MSM1).